We begin with the raw amino-acid sequence, 565 residues long: Maturase K (565 aa).

This sequence belongs to the intron maturase 2 family. MatK subfamily.

The protein localises to the plastid. The protein resides in the chloroplast. Its function is as follows. Usually encoded in the trnK tRNA gene intron. Probably assists in splicing its own and other chloroplast group II introns. The chain is Maturase K from Staurastrum punctulatum (Green alga).